The following is a 439-amino-acid chain: GTPase Der (439 aa).

2 EngA-type G domains span residues 2–168 (ATVL…EEKG) and 181–357 (IKVA…ASYT). GTP-binding positions include 8-15 (GKPNVGKS), 55-59 (DTCGV), 118-121 (NKAE), 187-194 (GRPNVGKS), 234-238 (DTAGL), and 300-303 (NKWD). Residues 358-439 (TKVPSSAINS…PIFLKFKRSR (82 aa)) enclose the KH-like domain.

This sequence belongs to the TRAFAC class TrmE-Era-EngA-EngB-Septin-like GTPase superfamily. EngA (Der) GTPase family. As to quaternary structure, associates with the 50S ribosomal subunit.

In terms of biological role, GTPase that plays an essential role in the late steps of ribosome biogenesis. The sequence is that of GTPase Der from Thermotoga sp. (strain RQ2).